Consider the following 417-residue polypeptide: 4-hydroxy-3-methylbut-2-en-1-yl diphosphate synthase (flavodoxin) (417 aa).

Cys303, Cys306, Cys349, and Glu356 together coordinate [4Fe-4S] cluster.

This sequence belongs to the IspG family. It depends on [4Fe-4S] cluster as a cofactor.

The enzyme catalyses (2E)-4-hydroxy-3-methylbut-2-enyl diphosphate + oxidized [flavodoxin] + H2O + 2 H(+) = 2-C-methyl-D-erythritol 2,4-cyclic diphosphate + reduced [flavodoxin]. Its pathway is isoprenoid biosynthesis; isopentenyl diphosphate biosynthesis via DXP pathway; isopentenyl diphosphate from 1-deoxy-D-xylulose 5-phosphate: step 5/6. In terms of biological role, converts 2C-methyl-D-erythritol 2,4-cyclodiphosphate (ME-2,4cPP) into 1-hydroxy-2-methyl-2-(E)-butenyl 4-diphosphate. The protein is 4-hydroxy-3-methylbut-2-en-1-yl diphosphate synthase (flavodoxin) of Mesorhizobium japonicum (strain LMG 29417 / CECT 9101 / MAFF 303099) (Mesorhizobium loti (strain MAFF 303099)).